Consider the following 829-residue polypeptide: Isethionate sulfite-lyase (829 aa).

A PFL domain is found at 31–699 (ERVFNILDSF…VVSATPNGRL (669 aa)). 2-hydroxyethane-1-sulfonate contacts are provided by residues Arg188, Gln192, 467-469 (CTE), and Arg677. Catalysis depends on Cys467, which acts as the Cysteine radical intermediate. Glu469 serves as the catalytic Proton acceptor. The Glycine radical domain maps to 706–829 (DGSSASHGAD…LIARTQHDAM (124 aa)). A Glycine radical modification is found at Gly804.

This sequence belongs to the glycyl radical enzyme (GRE) family. In terms of assembly, homodimer. In terms of processing, requires the activating protein IslB to generate the key active site glycyl radical on Gly-804 that is involved in catalysis.

The enzyme catalyses 2-hydroxyethane-1-sulfonate = acetaldehyde + sulfite + H(+). It participates in organosulfur degradation; alkanesulfonate degradation. In terms of biological role, involved in an anaerobic respiration pathway that converts the sulfonate isethionate (2-hydroxyethanesulfonate) to ammonia, acetate and sulfide. Catalyzes the radical-mediated C-S bond cleavage of isethionate (2-hydroxyethanesulfonate) to form sulfite and acetaldehyde. This Oleidesulfovibrio alaskensis (strain ATCC BAA-1058 / DSM 17464 / G20) (Desulfovibrio alaskensis) protein is Isethionate sulfite-lyase.